The chain runs to 432 residues: Heme-based aerotactic transducer HemAT (432 aa).

The Methyl-accepting transducer domain maps to 184 to 420 (YNQTRDEQEE…EVSRAVSHVA (237 aa)).

It belongs to the methyl-accepting chemotaxis (MCP) protein family. In terms of assembly, homotetramer.

Functionally, heme-containing signal transducer responsible for aerotaxis, the migratory response toward or away from oxygen. The polypeptide is Heme-based aerotactic transducer HemAT (hemAT) (Bacillus subtilis (strain 168)).